The sequence spans 233 residues: Lysoplasmalogenase TMEM86B (233 aa).

The Cytoplasmic portion of the chain corresponds to 1–30 (MPCCDPYPWIGLNVGRLSSFPLLKYPQVRR). A helical transmembrane segment spans residues 31–47 (WLAPFIVACSLYFLLWI). At 48–53 (PEDQPS) the chain is on the extracellular side. Residues 54-75 (WVSALVKCQPILCLVLFLWAVA) form a helical membrane-spanning segment. Over 76–81 (PGGSYT) the chain is Cytoplasmic. Residues 82–100 (WLLQGALTCSAVGDACLIW) traverse the membrane as a helical segment. Residues 101-106 (PEAFFY) are Extracellular-facing. The chain crosses the membrane as a helical span at residues 107–124 (GMAVFSVAHLLYLWAFGL). Topologically, residues 125 to 130 (SPLQPG) are cytoplasmic. The helical transmembrane segment at 131–147 (LLLCTTLASLTYYSFLL) threads the bilayer. Topologically, residues 148-153 (LHLEPN) are extracellular. A helical transmembrane segment spans residues 154 to 170 (MVLPVAAYGLILNTMLW). At 171 to 178 (RGLVLGRS) the chain is on the cytoplasmic side. The chain crosses the membrane as a helical span at residues 179–195 (AGWGAVLFIFSDGVLAW). At 196-206 (DTFVYTLPFAR) the chain is on the extracellular side. A helical membrane pass occupies residues 207–225 (LVTMSTYYAAQLLLTLSAL). Over 226–233 (RSPGLKTH) the chain is Cytoplasmic.

The protein belongs to the TMEM86 family. Homodimer.

The protein localises to the endoplasmic reticulum membrane. The protein resides in the cytoplasm. It carries out the reaction a 1-O-(1Z-alkenyl)-sn-glycero-3-phosphocholine + H2O = a 2,3-saturated aldehyde + sn-glycerol 3-phosphocholine. The catalysed reaction is a 1-O-(1Z-alkenyl)-sn-glycero-3-phosphoethanolamine + H2O = a 2,3-saturated aldehyde + sn-glycero-3-phosphoethanolamine. With respect to regulation, competitively inhibited by lysophosphatidic acid. Functionally, catalyzes the hydrolysis of the vinyl ether bond of choline or ethanolamine lysoplasmalogens, forming fatty aldehyde and glycerophosphocholine or glycerophosphoethanolamine, respectively and is specific for the sn-2-deacylated (lyso) form of plasmalogen. The protein is Lysoplasmalogenase TMEM86B (Tmem86b) of Rattus norvegicus (Rat).